Here is a 351-residue protein sequence, read N- to C-terminus: Glycerol-3-phosphate dehydrogenase [NAD(P)+] (351 aa).

The NADPH site is built by S18, W19, R38, and K122. Positions 122, 153, and 155 each coordinate sn-glycerol 3-phosphate. A157 is an NADPH binding site. The sn-glycerol 3-phosphate site is built by K208, D261, S271, R272, and N273. The Proton acceptor role is filled by K208. R272 serves as a coordination point for NADPH. E297 contributes to the NADPH binding site.

Belongs to the NAD-dependent glycerol-3-phosphate dehydrogenase family.

It localises to the cytoplasm. The enzyme catalyses sn-glycerol 3-phosphate + NAD(+) = dihydroxyacetone phosphate + NADH + H(+). It carries out the reaction sn-glycerol 3-phosphate + NADP(+) = dihydroxyacetone phosphate + NADPH + H(+). The protein operates within membrane lipid metabolism; glycerophospholipid metabolism. Functionally, catalyzes the reduction of the glycolytic intermediate dihydroxyacetone phosphate (DHAP) to sn-glycerol 3-phosphate (G3P), the key precursor for phospholipid synthesis. This chain is Glycerol-3-phosphate dehydrogenase [NAD(P)+], found in Bordetella pertussis (strain Tohama I / ATCC BAA-589 / NCTC 13251).